A 328-amino-acid polypeptide reads, in one-letter code: Tetraacyldisaccharide 4'-kinase (328 aa).

55 to 62 (TAGGNGKT) is a binding site for ATP.

Belongs to the LpxK family.

It catalyses the reaction a lipid A disaccharide + ATP = a lipid IVA + ADP + H(+). Its pathway is glycolipid biosynthesis; lipid IV(A) biosynthesis; lipid IV(A) from (3R)-3-hydroxytetradecanoyl-[acyl-carrier-protein] and UDP-N-acetyl-alpha-D-glucosamine: step 6/6. Transfers the gamma-phosphate of ATP to the 4'-position of a tetraacyldisaccharide 1-phosphate intermediate (termed DS-1-P) to form tetraacyldisaccharide 1,4'-bis-phosphate (lipid IVA). This Escherichia coli (strain K12 / MC4100 / BW2952) protein is Tetraacyldisaccharide 4'-kinase.